Here is a 662-residue protein sequence, read N- to C-terminus: UvrABC system protein B (662 aa).

Positions 31-188 constitute a Helicase ATP-binding domain; that stretch reads DNIEGGEKAQ…NDLVDIQFER (158 aa). 44-51 contacts ATP; it reads GATGTGKT. The short motif at 97–120 is the Beta-hairpin element; that stretch reads YYDYYQPEAYVPSSDTYIEKDSSV. The Helicase C-terminal domain maps to 435–601; the sequence is QIDDLLGEIN…TIKKEIRDLI (167 aa). Residues 626 to 661 form the UVR domain; it reads KDMIKKLEGQMQEAAGLLDFELAAQIRDMILEIKAM.

This sequence belongs to the UvrB family. As to quaternary structure, forms a heterotetramer with UvrA during the search for lesions. Interacts with UvrC in an incision complex.

The protein localises to the cytoplasm. Functionally, the UvrABC repair system catalyzes the recognition and processing of DNA lesions. A damage recognition complex composed of 2 UvrA and 2 UvrB subunits scans DNA for abnormalities. Upon binding of the UvrA(2)B(2) complex to a putative damaged site, the DNA wraps around one UvrB monomer. DNA wrap is dependent on ATP binding by UvrB and probably causes local melting of the DNA helix, facilitating insertion of UvrB beta-hairpin between the DNA strands. Then UvrB probes one DNA strand for the presence of a lesion. If a lesion is found the UvrA subunits dissociate and the UvrB-DNA preincision complex is formed. This complex is subsequently bound by UvrC and the second UvrB is released. If no lesion is found, the DNA wraps around the other UvrB subunit that will check the other stand for damage. The protein is UvrABC system protein B of Streptococcus sanguinis (strain SK36).